Reading from the N-terminus, the 388-residue chain is Succinate--CoA ligase [ADP-forming] subunit beta (388 aa).

One can recognise an ATP-grasp domain in the interval 9–244 (KEILRKFGVA…LDEEDPAEIE (236 aa)). ATP is bound by residues K46, 53–55 (GRG), E99, A102, and E107. Mg(2+)-binding residues include N199 and D213. Residues N264 and 321-323 (GIM) each bind substrate.

The protein belongs to the succinate/malate CoA ligase beta subunit family. In terms of assembly, heterotetramer of two alpha and two beta subunits. Mg(2+) is required as a cofactor.

It catalyses the reaction succinate + ATP + CoA = succinyl-CoA + ADP + phosphate. It carries out the reaction GTP + succinate + CoA = succinyl-CoA + GDP + phosphate. The protein operates within carbohydrate metabolism; tricarboxylic acid cycle; succinate from succinyl-CoA (ligase route): step 1/1. Functionally, succinyl-CoA synthetase functions in the citric acid cycle (TCA), coupling the hydrolysis of succinyl-CoA to the synthesis of either ATP or GTP and thus represents the only step of substrate-level phosphorylation in the TCA. The beta subunit provides nucleotide specificity of the enzyme and binds the substrate succinate, while the binding sites for coenzyme A and phosphate are found in the alpha subunit. The sequence is that of Succinate--CoA ligase [ADP-forming] subunit beta from Burkholderia cenocepacia (strain ATCC BAA-245 / DSM 16553 / LMG 16656 / NCTC 13227 / J2315 / CF5610) (Burkholderia cepacia (strain J2315)).